The sequence spans 129 residues: Phosphoribosyl-AMP cyclohydrolase (129 aa).

Position 85 (aspartate 85) interacts with Mg(2+). Cysteine 86 is a Zn(2+) binding site. Mg(2+) contacts are provided by aspartate 87 and aspartate 89. Residues cysteine 102 and cysteine 109 each contribute to the Zn(2+) site.

It belongs to the PRA-CH family. Homodimer. The cofactor is Mg(2+). It depends on Zn(2+) as a cofactor.

It is found in the cytoplasm. The catalysed reaction is 1-(5-phospho-beta-D-ribosyl)-5'-AMP + H2O = 1-(5-phospho-beta-D-ribosyl)-5-[(5-phospho-beta-D-ribosylamino)methylideneamino]imidazole-4-carboxamide. Its pathway is amino-acid biosynthesis; L-histidine biosynthesis; L-histidine from 5-phospho-alpha-D-ribose 1-diphosphate: step 3/9. Functionally, catalyzes the hydrolysis of the adenine ring of phosphoribosyl-AMP. This Methanococcus maripaludis (strain C7 / ATCC BAA-1331) protein is Phosphoribosyl-AMP cyclohydrolase.